A 294-amino-acid chain; its full sequence is Elongation factor Ts, mitochondrial 2 (294 aa).

The protein belongs to the EF-Ts family.

The protein localises to the mitochondrion. In terms of biological role, associates with the EF-Tu.GDP complex and induces the exchange of GDP to GTP. It remains bound to the aminoacyl-tRNA.EF-Tu.GTP complex up to the GTP hydrolysis stage on the ribosome. The polypeptide is Elongation factor Ts, mitochondrial 2 (Paramecium tetraurelia).